A 446-amino-acid polypeptide reads, in one-letter code: NADH oxidase (446 aa).

Residues 7–11 (GTNHA), Asp-32, Cys-42, Val-79, 109–112 (ATGS), Lys-131, and Tyr-158 each bind FAD. His-10 serves as the catalytic Proton acceptor. Cys-42 acts as the Redox-active in catalysis. Cysteine sulfinic acid (-SO2H) is present on Cys-42. The NAD(+) site is built by Ile-159, Asp-178, Tyr-187, and Gly-244. Position 282 (Asp-282) interacts with FAD. Ala-298 is a binding site for NAD(+). Residues Leu-299, Ala-300, and Ser-301 each coordinate FAD. Gly-329 is an NAD(+) binding site. FAD is bound at residue Phe-427.

It belongs to the class-III pyridine nucleotide-disulfide oxidoreductase family. In terms of assembly, homodimer. FAD is required as a cofactor.

It carries out the reaction 2 NADH + O2 + 2 H(+) = 2 NAD(+) + 2 H2O. With respect to regulation, inhibited by hydrogen peroxide, sulfhydryl reagents and quinine, but not by EDTA. In terms of biological role, catalyzes the four-electron reduction of molecular oxygen to water. Active on beta-NADH, but not on alpha-NADH, beta-NADPH or alpha-NADPH. Under aerobic conditions, oxygen acts as the electron acceptor. Under anaerobic conditions, DCIP and MB can replace oxygen as the electron acceptor. The polypeptide is NADH oxidase (Lactococcus lactis subsp. cremoris (strain MG1363)).